The chain runs to 334 residues: Stabilizer of axonemal microtubules 3 (334 aa).

Disordered regions lie at residues 81-105 (AYVP…PTRT), 128-153 (YQSS…YFGP), and 233-260 (QVWS…RVPR). Residues 128–141 (YQSSETRAQYTGSP) show a composition bias toward polar residues. Residues 240–251 (QRPPCPRSSRPP) show a composition bias toward pro residues.

This chain is Stabilizer of axonemal microtubules 3, found in Homo sapiens (Human).